The chain runs to 71 residues: MIFKVFYQENADEAPVREKTKTLYIEAESERDVRRKLEGRPINIEYIQPLEGAHLEYEKKSPNFQVLEISS.

This sequence belongs to the RNA polymerase subunit epsilon family. RNAP is composed of a core of 2 alpha, a beta and a beta' subunit. The core is associated with a delta subunit, and at least one of epsilon or omega. When a sigma factor is associated with the core the holoenzyme is formed, which can initiate transcription.

The enzyme catalyses RNA(n) + a ribonucleoside 5'-triphosphate = RNA(n+1) + diphosphate. Its function is as follows. A non-essential component of RNA polymerase (RNAP). The protein is DNA-directed RNA polymerase subunit epsilon of Geobacillus kaustophilus (strain HTA426).